The primary structure comprises 98 residues: NADH-ubiquinone oxidoreductase chain 4L (98 aa).

3 helical membrane passes run 1–21 (MTSI…GVLI), 28–48 (STLL…ALLI), and 59–79 (APII…ALLV).

This sequence belongs to the complex I subunit 4L family. In terms of assembly, core subunit of respiratory chain NADH dehydrogenase (Complex I) which is composed of 45 different subunits.

It localises to the mitochondrion inner membrane. It carries out the reaction a ubiquinone + NADH + 5 H(+)(in) = a ubiquinol + NAD(+) + 4 H(+)(out). In terms of biological role, core subunit of the mitochondrial membrane respiratory chain NADH dehydrogenase (Complex I) which catalyzes electron transfer from NADH through the respiratory chain, using ubiquinone as an electron acceptor. Part of the enzyme membrane arm which is embedded in the lipid bilayer and involved in proton translocation. This chain is NADH-ubiquinone oxidoreductase chain 4L (MT-ND4L), found in Trichosurus vulpecula (Brush-tailed possum).